Here is a 58-residue protein sequence, read N- to C-terminus: Small ribosomal subunit protein bS21A (58 aa).

The segment at Tyr38 to Asn58 is disordered. A compositionally biased stretch (basic and acidic residues) spans Ala49 to Asn58.

The protein belongs to the bacterial ribosomal protein bS21 family.

The chain is Small ribosomal subunit protein bS21A from Trichormus variabilis (strain ATCC 29413 / PCC 7937) (Anabaena variabilis).